The chain runs to 310 residues: Transcription factor LRL2 (310 aa).

Low complexity-rich tracts occupy residues 1–20 (MNSSSLLTPSSSPSPHLQSP) and 104–126 (QTQTQSQATASATTGGATAQPQT). Disordered stretches follow at residues 1–23 (MNSSSLLTPSSSPSPHLQSPATF) and 95–143 (FHLP…PHSI). Positions 136–149 (QATDPHSIAERLRR) are basic motif; degenerate. A bHLH domain is found at 136–185 (QATDPHSIAERLRRERIAERMKSLQELVPNGNKTDKASMLDEIIDYVKFL). Residues 150-185 (ERIAERMKSLQELVPNGNKTDKASMLDEIIDYVKFL) form a helix-loop-helix motif region. A disordered region spans residues 203–225 (ASSQISEDAGGSHENTSSSGEAK).

Homodimer. As to expression, expressed constitutively in roots, leaves, stems, and flowers.

Its subcellular location is the nucleus. Transcription factor that regulates the development of root hairs. Transcription factor that regulates the development of sperm cells. The chain is Transcription factor LRL2 from Arabidopsis thaliana (Mouse-ear cress).